The following is a 270-amino-acid chain: Acetylglutamate kinase (270 aa).

Substrate contacts are provided by residues 41 to 42 (GG), R63, and N166.

The protein belongs to the acetylglutamate kinase family. ArgB subfamily.

Its subcellular location is the cytoplasm. The catalysed reaction is N-acetyl-L-glutamate + ATP = N-acetyl-L-glutamyl 5-phosphate + ADP. Its pathway is amino-acid biosynthesis; L-arginine biosynthesis; N(2)-acetyl-L-ornithine from L-glutamate: step 2/4. Its function is as follows. Catalyzes the ATP-dependent phosphorylation of N-acetyl-L-glutamate. The protein is Acetylglutamate kinase of Anaeromyxobacter dehalogenans (strain 2CP-C).